Consider the following 235-residue polypeptide: Cytochrome c oxidase subunit 2 (235 aa).

The Mitochondrial intermembrane segment spans residues 1-14 (MPYPMQLGFQDATS). Residues 15-45 (PIMEELMYFHDHTLMIVFLISSLVLYIIILM) traverse the membrane as a helical segment. Residues 46-59 (LTTKLTHTSTMDAQ) lie on the Mitochondrial matrix side of the membrane. A helical membrane pass occupies residues 60 to 87 (EVETIWTILPAVILILIALPSLRILYMM). Topologically, residues 88 to 235 (DEIYNPYLTV…MQSFLSYLYI (148 aa)) are mitochondrial intermembrane. H161, C196, E198, C200, H204, and M207 together coordinate Cu cation. Position 198 (E198) interacts with Mg(2+). Y218 is modified (phosphotyrosine).

Belongs to the cytochrome c oxidase subunit 2 family. As to quaternary structure, component of the cytochrome c oxidase (complex IV, CIV), a multisubunit enzyme composed of 14 subunits. The complex is composed of a catalytic core of 3 subunits MT-CO1, MT-CO2 and MT-CO3, encoded in the mitochondrial DNA, and 11 supernumerary subunits COX4I, COX5A, COX5B, COX6A, COX6B, COX6C, COX7A, COX7B, COX7C, COX8 and NDUFA4, which are encoded in the nuclear genome. The complex exists as a monomer or a dimer and forms supercomplexes (SCs) in the inner mitochondrial membrane with NADH-ubiquinone oxidoreductase (complex I, CI) and ubiquinol-cytochrome c oxidoreductase (cytochrome b-c1 complex, complex III, CIII), resulting in different assemblies (supercomplex SCI(1)III(2)IV(1) and megacomplex MCI(2)III(2)IV(2)). Found in a complex with TMEM177, COA6, COX18, COX20, SCO1 and SCO2. Interacts with TMEM177 in a COX20-dependent manner. Interacts with COX20. Interacts with COX16. Cu cation serves as cofactor.

Its subcellular location is the mitochondrion inner membrane. It carries out the reaction 4 Fe(II)-[cytochrome c] + O2 + 8 H(+)(in) = 4 Fe(III)-[cytochrome c] + 2 H2O + 4 H(+)(out). Functionally, component of the cytochrome c oxidase, the last enzyme in the mitochondrial electron transport chain which drives oxidative phosphorylation. The respiratory chain contains 3 multisubunit complexes succinate dehydrogenase (complex II, CII), ubiquinol-cytochrome c oxidoreductase (cytochrome b-c1 complex, complex III, CIII) and cytochrome c oxidase (complex IV, CIV), that cooperate to transfer electrons derived from NADH and succinate to molecular oxygen, creating an electrochemical gradient over the inner membrane that drives transmembrane transport and the ATP synthase. Cytochrome c oxidase is the component of the respiratory chain that catalyzes the reduction of oxygen to water. Electrons originating from reduced cytochrome c in the intermembrane space (IMS) are transferred via the dinuclear copper A center (CU(A)) of subunit 2 and heme A of subunit 1 to the active site in subunit 1, a binuclear center (BNC) formed by heme A3 and copper B (CU(B)). The BNC reduces molecular oxygen to 2 water molecules using 4 electrons from cytochrome c in the IMS and 4 protons from the mitochondrial matrix. This Didelphis virginiana (North American opossum) protein is Cytochrome c oxidase subunit 2 (MT-CO2).